We begin with the raw amino-acid sequence, 274 residues long: Orotidine 5'-phosphate decarboxylase (274 aa).

Substrate is bound by residues aspartate 40, 62 to 64 (KTH), 93 to 102 (DRKFVDIGNT), tyrosine 227, and arginine 245. The active-site Proton donor is the lysine 95.

This sequence belongs to the OMP decarboxylase family.

The catalysed reaction is orotidine 5'-phosphate + H(+) = UMP + CO2. Its pathway is pyrimidine metabolism; UMP biosynthesis via de novo pathway; UMP from orotate: step 2/2. The chain is Orotidine 5'-phosphate decarboxylase (URA3) from Coccidioides immitis (strain RS) (Valley fever fungus).